We begin with the raw amino-acid sequence, 244 residues long: Serine-rich single-pass membrane protein 1 (244 aa).

A helical membrane pass occupies residues 35–55 (CGTIGNFLLWYFVIVFVLMFF). Disordered stretches follow at residues 65 to 112 (DKKD…LTPV), 132 to 191 (QSQF…LGSY), and 213 to 244 (HSQQ…FSKF). Residues 80–94 (ASKETSYKWQSKDGA) are compositionally biased toward basic and acidic residues. Polar residues-rich tracts occupy residues 97 to 112 (PSQT…LTPV) and 132 to 142 (QSQFNEVNQNQ). Positions 161–176 (SWKESESEHHPSPDSI) are enriched in basic and acidic residues. A compositionally biased stretch (polar residues) spans 231-244 (ESSISDINTKFSKF).

The protein resides in the membrane. The chain is Serine-rich single-pass membrane protein 1 (SSMEM1) from Macaca fascicularis (Crab-eating macaque).